A 382-amino-acid polypeptide reads, in one-letter code: D-galactonate dehydratase (382 aa).

Residue Asp183 participates in Mg(2+) binding. The Proton donor role is filled by His185. Mg(2+)-binding residues include Glu209 and Glu235. Residue His285 is the Proton acceptor of the active site.

Belongs to the mandelate racemase/muconate lactonizing enzyme family. GalD subfamily. It depends on Mg(2+) as a cofactor.

The catalysed reaction is D-galactonate = 2-dehydro-3-deoxy-D-galactonate + H2O. It participates in carbohydrate acid metabolism; D-galactonate degradation; D-glyceraldehyde 3-phosphate and pyruvate from D-galactonate: step 1/3. Catalyzes the dehydration of D-galactonate to 2-keto-3-deoxy-D-galactonate. The protein is D-galactonate dehydratase of Escherichia coli O9:H4 (strain HS).